A 746-amino-acid chain; its full sequence is Polyphosphate kinase (746 aa).

Polar residues predominate over residues methionine 1 to valine 17. Residues methionine 1 to proline 60 are disordered. The span at proline 37–glutamine 53 shows a compositional bias: acidic residues. ATP is bound at residue asparagine 102. The Mg(2+) site is built by arginine 429 and arginine 459. Histidine 489 acts as the Phosphohistidine intermediate in catalysis. ATP contacts are provided by tyrosine 522, arginine 618, and histidine 646.

This sequence belongs to the polyphosphate kinase 1 (PPK1) family. Mg(2+) is required as a cofactor. An intermediate of this reaction is the autophosphorylated ppk in which a phosphate is covalently linked to a histidine residue through a N-P bond.

The enzyme catalyses [phosphate](n) + ATP = [phosphate](n+1) + ADP. Catalyzes the reversible transfer of the terminal phosphate of ATP to form a long-chain polyphosphate (polyP). The sequence is that of Polyphosphate kinase from Streptomyces coelicolor (strain ATCC BAA-471 / A3(2) / M145).